The chain runs to 368 residues: Large ribosomal subunit protein mL46 (368 aa).

Positions 53 to 81 (TATATTTTTLPPPHPPVTTSTGTHAATST) are disordered. Residues 69–81 (VTTSTGTHAATST) are compositionally biased toward low complexity.

This sequence belongs to the mitochondrion-specific ribosomal protein mL46 family. In terms of assembly, component of the mitochondrial large ribosomal subunit (mt-LSU). Mature N.crassa 74S mitochondrial ribosomes consist of a small (37S) and a large (54S) subunit. The 37S small subunit contains a 16S ribosomal RNA (16S mt-rRNA) and 32 different proteins. The 54S large subunit contains a 23S rRNA (23S mt-rRNA) and 42 different proteins.

The protein localises to the mitochondrion. Component of the mitochondrial ribosome (mitoribosome), a dedicated translation machinery responsible for the synthesis of mitochondrial genome-encoded proteins, including at least some of the essential transmembrane subunits of the mitochondrial respiratory chain. The mitoribosomes are attached to the mitochondrial inner membrane and translation products are cotranslationally integrated into the membrane. The polypeptide is Large ribosomal subunit protein mL46 (mrpl17) (Neurospora crassa (strain ATCC 24698 / 74-OR23-1A / CBS 708.71 / DSM 1257 / FGSC 987)).